The following is a 611-amino-acid chain: Rop guanine nucleotide exchange factor 5 (611 aa).

Residues 1 to 62 form a disordered region; it reads MENLVKSCAG…PPPPPSQILG (62 aa). Residues 34-51 show a composition bias toward low complexity; sequence STSGASYESSSTTTVASS. Residues 93–477 enclose the PRONE domain; the sequence is FKAKEMNSAD…DLTKQSDDNN (385 aa). Disordered regions lie at residues 513–541 and 588–611; these read TTPG…TNKI and DVEE…YTVS. Positions 525–541 are enriched in basic and acidic residues; that stretch reads KKGERRTPYSSKDTNKI.

In terms of biological role, guanine-nucleotide exchange factor (GEF) that acts as an activator of Rop (Rho of plants) GTPases by promoting the exchange of GDP for GTP. This is Rop guanine nucleotide exchange factor 5 (ROPGEF5) from Arabidopsis thaliana (Mouse-ear cress).